The following is a 396-amino-acid chain: Ornithine aminotransferase (396 aa).

The residue at position 255 (K255) is an N6-(pyridoxal phosphate)lysine.

This sequence belongs to the class-III pyridoxal-phosphate-dependent aminotransferase family. OAT subfamily. The cofactor is pyridoxal 5'-phosphate.

It is found in the cytoplasm. It carries out the reaction a 2-oxocarboxylate + L-ornithine = L-glutamate 5-semialdehyde + an L-alpha-amino acid. The protein operates within amino-acid biosynthesis; L-proline biosynthesis; L-glutamate 5-semialdehyde from L-ornithine: step 1/1. Functionally, catalyzes the interconversion of ornithine to glutamate semialdehyde. This chain is Ornithine aminotransferase, found in Staphylococcus epidermidis (strain ATCC 35984 / DSM 28319 / BCRC 17069 / CCUG 31568 / BM 3577 / RP62A).